A 67-amino-acid chain; its full sequence is Large ribosomal subunit protein uL29 (67 aa).

This sequence belongs to the universal ribosomal protein uL29 family.

This is Large ribosomal subunit protein uL29 from Exiguobacterium sp. (strain ATCC BAA-1283 / AT1b).